Consider the following 137-residue polypeptide: Small ribosomal subunit protein bS16m (137 aa).

The transit peptide at 1 to 34 directs the protein to the mitochondrion; the sequence is MVHLTTLLCKAYRGGHLTIRLALGGCTNRPFYRI. The residue at position 130 (threonine 130) is a Phosphothreonine.

It belongs to the bacterial ribosomal protein bS16 family. Component of the mitochondrial ribosome small subunit (28S) which comprises a 12S rRNA and about 30 distinct proteins.

It is found in the mitochondrion. In Pongo abelii (Sumatran orangutan), this protein is Small ribosomal subunit protein bS16m (MRPS16).